Here is a 317-residue protein sequence, read N- to C-terminus: tRNA N6-adenosine threonylcarbamoyltransferase (317 aa).

Positions 110 and 114 each coordinate Fe cation. Residues 132–136 (VVSGG), aspartate 165, glycine 178, aspartate 182, and asparagine 271 each bind substrate. Aspartate 300 contributes to the Fe cation binding site.

The protein belongs to the KAE1 / TsaD family. Requires Fe(2+) as cofactor.

The protein resides in the cytoplasm. It carries out the reaction L-threonylcarbamoyladenylate + adenosine(37) in tRNA = N(6)-L-threonylcarbamoyladenosine(37) in tRNA + AMP + H(+). Required for the formation of a threonylcarbamoyl group on adenosine at position 37 (t(6)A37) in tRNAs that read codons beginning with adenine. Is involved in the transfer of the threonylcarbamoyl moiety of threonylcarbamoyl-AMP (TC-AMP) to the N6 group of A37, together with TsaE and TsaB. TsaD likely plays a direct catalytic role in this reaction. The sequence is that of tRNA N6-adenosine threonylcarbamoyltransferase from Mesoplasma florum (strain ATCC 33453 / NBRC 100688 / NCTC 11704 / L1) (Acholeplasma florum).